A 482-amino-acid polypeptide reads, in one-letter code: Ribosomal RNA small subunit methyltransferase F (482 aa).

Residues 119–125, E143, D170, and D188 contribute to the S-adenosyl-L-methionine site; that span reads ASAPGSK. C241 (nucleophile) is an active-site residue.

Belongs to the class I-like SAM-binding methyltransferase superfamily. RsmB/NOP family.

It localises to the cytoplasm. The enzyme catalyses cytidine(1407) in 16S rRNA + S-adenosyl-L-methionine = 5-methylcytidine(1407) in 16S rRNA + S-adenosyl-L-homocysteine + H(+). Its function is as follows. Specifically methylates the cytosine at position 1407 (m5C1407) of 16S rRNA. The chain is Ribosomal RNA small subunit methyltransferase F from Shewanella sp. (strain MR-7).